Reading from the N-terminus, the 265-residue chain is Undecaprenyl-diphosphatase (265 aa).

A run of 8 helical transmembrane segments spans residues M1 to I21, G40 to H60, W87 to I107, A113 to V133, I151 to A173, S188 to I208, V214 to I234, and I244 to V264.

The protein belongs to the UppP family.

It is found in the cell inner membrane. It carries out the reaction di-trans,octa-cis-undecaprenyl diphosphate + H2O = di-trans,octa-cis-undecaprenyl phosphate + phosphate + H(+). In terms of biological role, catalyzes the dephosphorylation of undecaprenyl diphosphate (UPP). Confers resistance to bacitracin. The sequence is that of Undecaprenyl-diphosphatase from Chromohalobacter salexigens (strain ATCC BAA-138 / DSM 3043 / CIP 106854 / NCIMB 13768 / 1H11).